The chain runs to 720 residues: Polyribonucleotide nucleotidyltransferase (720 aa).

The Mg(2+) site is built by aspartate 484 and aspartate 490. Residues 551 to 610 (PRMYKINIDPSKIGSVIGSGGKTIRSIIEQTNTTVDIENDGTVVIGATDEASAKKAIKII) enclose the KH domain. One can recognise an S1 motif domain in the interval 620–688 (GSIYTGKVTR…NQGRVNLSHR (69 aa)). Residues 697–720 (PISRNRDSQPRRPGPFRPSDRSNS) are disordered.

Belongs to the polyribonucleotide nucleotidyltransferase family. Mg(2+) is required as a cofactor.

The protein localises to the cytoplasm. The catalysed reaction is RNA(n+1) + phosphate = RNA(n) + a ribonucleoside 5'-diphosphate. Involved in mRNA degradation. Catalyzes the phosphorolysis of single-stranded polyribonucleotides processively in the 3'- to 5'-direction. The chain is Polyribonucleotide nucleotidyltransferase from Dehalococcoides mccartyi (strain CBDB1).